Reading from the N-terminus, the 580-residue chain is Xylulose kinase (580 aa).

Substrate is bound by residues histidine 99, arginine 170, aspartate 280, and asparagine 281. ATP is bound by residues tryptophan 355, glycine 441–alanine 442, and asparagine 445.

The protein belongs to the FGGY kinase family. Monomer.

The enzyme catalyses D-xylulose + ATP = D-xylulose 5-phosphate + ADP + H(+). In terms of biological role, phosphorylates D-xylulose to produce D-xylulose 5-phosphate, a molecule that may play an important role in the regulation of glucose metabolism and lipogenesis. This chain is Xylulose kinase (XYLB), found in Pongo abelii (Sumatran orangutan).